Consider the following 67-residue polypeptide: Major cold shock protein (67 aa).

One can recognise a CSD domain in the interval 4–63; the sequence is GTVKWFNAEKGFGFISTENGQDVFAHFSAIQTNGFKTLEEGQKVAFDVEEGQRGPQAVNI.

Homodimer.

Its subcellular location is the cytoplasm. This is Major cold shock protein (cspA) from Streptococcus pyogenes serotype M3 (strain ATCC BAA-595 / MGAS315).